The primary structure comprises 189 residues: Orotate phosphoribosyltransferase (189 aa).

Residues R94, K95, K98, and 120–128 (EDVTTTGGS) each bind 5-phospho-alpha-D-ribose 1-diphosphate. 2 residues coordinate orotate: T124 and R152.

Belongs to the purine/pyrimidine phosphoribosyltransferase family. PyrE subfamily. In terms of assembly, homodimer. Mg(2+) is required as a cofactor.

The catalysed reaction is orotidine 5'-phosphate + diphosphate = orotate + 5-phospho-alpha-D-ribose 1-diphosphate. It participates in pyrimidine metabolism; UMP biosynthesis via de novo pathway; UMP from orotate: step 1/2. Its function is as follows. Catalyzes the transfer of a ribosyl phosphate group from 5-phosphoribose 1-diphosphate to orotate, leading to the formation of orotidine monophosphate (OMP). This Thermococcus gammatolerans (strain DSM 15229 / JCM 11827 / EJ3) protein is Orotate phosphoribosyltransferase.